Here is a 500-residue protein sequence, read N- to C-terminus: Lysine--tRNA ligase (500 aa).

Positions 411 and 418 each coordinate Mg(2+).

It belongs to the class-II aminoacyl-tRNA synthetase family. As to quaternary structure, homodimer. The cofactor is Mg(2+).

It localises to the cytoplasm. It catalyses the reaction tRNA(Lys) + L-lysine + ATP = L-lysyl-tRNA(Lys) + AMP + diphosphate. In Actinobacillus pleuropneumoniae serotype 5b (strain L20), this protein is Lysine--tRNA ligase.